Consider the following 234-residue polypeptide: Sugar fermentation stimulation protein A (234 aa).

Positions 201–220 (LLSEAQQRGVEILAYKAEIS) form a DNA-binding region, H-T-H motif.

Belongs to the SfsA family.

Binds to DNA non-specifically. Could be a regulatory factor involved in maltose metabolism. The protein is Sugar fermentation stimulation protein A of Escherichia coli (strain 55989 / EAEC).